Reading from the N-terminus, the 157-residue chain is MSYNITSSNQYQYFAAMWAEPQAMLNQCVSALSQSYQTQAARDTVRQQFSNLLSAIVTPNQRFPESGYRVYINSAVLKPLYEALMKSFDTRNRIIETEEESRPSASEVANATQRVDDATVAIRSQIQLLLNELSNGHGLMNRAEFEVLLPWTTAPAT.

Ser2 carries the N-acetylserine; by host modification.

Belongs to the virgaviridae capsid protein family.

It is found in the virion. Functionally, capsid protein self-assembles to form rod-shaped virions about 18 nm in diameter with a central canal enclosing the viral genomic RNA. The sequence is that of Capsid protein (CP) from Digitalis lanata (Grecian foxglove).